The sequence spans 102 residues: ATP-dependent Clp protease adapter protein ClpS (102 aa).

The protein belongs to the ClpS family. As to quaternary structure, binds to the N-terminal domain of the chaperone ClpA.

Its function is as follows. Involved in the modulation of the specificity of the ClpAP-mediated ATP-dependent protein degradation. This Dechloromonas aromatica (strain RCB) protein is ATP-dependent Clp protease adapter protein ClpS.